Here is a 124-residue protein sequence, read N- to C-terminus: uncharacterized protein (124 aa).

The segment at 73 to 94 (CEETGAPIPLAKLAVLPTARTA) adopts a dksA C4-type; degenerate zinc-finger fold.

This is an uncharacterized protein from Bacillus subtilis (strain 168).